Here is a 148-residue protein sequence, read N- to C-terminus: Ribonuclease pancreatic (148 aa).

The first 25 residues, 1-25, serve as a signal peptide directing secretion; that stretch reads MGLEKSLILLPLLVLVFGWVQPSLG. Positions 32 and 35 each coordinate substrate. Residue His37 is the Proton acceptor of the active site. 4 disulfide bridges follow: Cys50–Cys108, Cys64–Cys119, Cys82–Cys134, and Cys89–Cys96. N-linked (GlcNAc...) asparagine glycosylation is present at Asn58. Substrate is bound at residue 65-69; it reads KPVNT. N-linked (GlcNAc...) asparagine glycosylation occurs at Asn86. Substrate contacts are provided by Lys90 and Arg109. His143 functions as the Proton donor in the catalytic mechanism.

Belongs to the pancreatic ribonuclease family. Monomer. Interacts with and forms tight 1:1 complexes with RNH1. Dimerization of two such complexes may occur. Interaction with RNH1 inhibits this protein. Pancreas.

It is found in the secreted. The catalysed reaction is an [RNA] containing cytidine + H2O = an [RNA]-3'-cytidine-3'-phosphate + a 5'-hydroxy-ribonucleotide-3'-[RNA].. It carries out the reaction an [RNA] containing uridine + H2O = an [RNA]-3'-uridine-3'-phosphate + a 5'-hydroxy-ribonucleotide-3'-[RNA].. Its function is as follows. Endonuclease that catalyzes the cleavage of RNA on the 3' side of pyrimidine nucleotides. Acts on single-stranded and double-stranded RNA. In Myodes glareolus (Bank vole), this protein is Ribonuclease pancreatic (RNASE1).